Consider the following 175-residue polypeptide: ATP-dependent protease subunit HslV (175 aa).

The active site involves threonine 2. Na(+) contacts are provided by glycine 157, cysteine 160, and threonine 163.

The protein belongs to the peptidase T1B family. HslV subfamily. In terms of assembly, a double ring-shaped homohexamer of HslV is capped on each side by a ring-shaped HslU homohexamer. The assembly of the HslU/HslV complex is dependent on binding of ATP.

The protein resides in the cytoplasm. It carries out the reaction ATP-dependent cleavage of peptide bonds with broad specificity.. With respect to regulation, allosterically activated by HslU binding. Functionally, protease subunit of a proteasome-like degradation complex believed to be a general protein degrading machinery. The sequence is that of ATP-dependent protease subunit HslV from Photobacterium profundum (strain SS9).